The sequence spans 733 residues: Hypermethylated in cancer 1 protein (733 aa).

The 64-residue stretch at 47–110 (CDVIIVVQNA…IYTGRLTDSV (64 aa)) folds into the BTB domain. The interval 154–315 (KYCHLRGGGS…PFRGSGGSPG (162 aa)) is mediates HDAC-dependent transcriptional repression. The residue at position 159 (Arg159) is an Omega-N-methylarginine. Positions 189-209 (YSSPAGPPPPPAAEPPSGPDA) are disordered. Positions 193 to 206 (AGPPPPPAAEPPSG) are enriched in pro residues. Phosphoserine is present on Ser237. The interaction with CTBP1 stretch occupies residues 241–247 (GLDLSKK). Residues 241–421 (GLDLSKKSPP…PGGHLEGYPC (181 aa)) are disordered. Residue Ser248 is modified to Phosphoserine. Position 333 is an N6-acetyllysine; alternate (Lys333). A Glycyl lysine isopeptide (Lys-Gly) (interchain with G-Cter in SUMO); alternate cross-link involves residue Lys333. The segment covering 344–361 (ELVRDRGSPGERLEERGG) has biased composition (basic and acidic residues). Ser366 carries the post-translational modification Phosphoserine. Pro residues predominate over residues 368–380 (GGPPLGLVPPPRY). 5 C2H2-type zinc fingers span residues 437–464 (YVCI…EEEE), 507–534 (YRCA…LTRP), 535–562 (YPCT…GLKP), 563–590 (FACD…GEKP), and 591–618 (YECQ…VGGA). Ser704 is subject to Phosphoserine.

The protein belongs to the krueppel C2H2-type zinc-finger protein family. Hic subfamily. Self-associates. Interacts with HIC2. Interacts with CTBP1 and CTBP2. Interacts with TCF7L2 and ARID1A. Interacts with MTA1 and MBD3; indicative for an association with the NuRD complex. Interacts with SIRT1. Acetylated on several residues, including Lys-333. Lys-333 is deacetylated by SIRT1. Post-translationally, sumoylated on Lys-333 by a PIAS family member, which enhances interaction with MTA1, positively regulates transcriptional repression activity and is enhanced by HDAC4. In terms of tissue distribution, ubiquitously expressed with highest levels in heart and lung.

It localises to the nucleus. Its function is as follows. Transcriptional repressor. Recognizes and binds to the consensus sequence '5-[CG]NG[CG]GGGCA[CA]CC-3'. May act as a tumor suppressor. Involved in development of head, face, limbs and ventral body wall. Involved in down-regulation of SIRT1 and thereby is involved in regulation of p53/TP53-dependent apoptotic DNA-damage responses. The specific target gene promoter association seems to be depend on corepressors, such as CTBP1 or CTBP2 and MTA1. In cooperation with MTA1 (indicative for an association with the NuRD complex) represses transcription from CCND1/cyclin-D1 and CDKN1C/p57Kip2 specifically in quiescent cells. Involved in regulation of the Wnt signaling pathway probably by association with TCF7L2 and preventing TCF7L2 and CTNNB1 association with promoters of TCF-responsive genes. Seems to repress transcription from E2F1 and ATOH1 which involves ARID1A, indicative for the participation of a distinct SWI/SNF-type chromatin-remodeling complex. Probably represses transcription from ACKR3, FGFBP1 and EFNA1. The protein is Hypermethylated in cancer 1 protein (Hic1) of Mus musculus (Mouse).